Reading from the N-terminus, the 344-residue chain is tRNA N6-adenosine threonylcarbamoyltransferase (344 aa).

Residues histidine 113 and histidine 117 each contribute to the Fe cation site. Substrate contacts are provided by residues leucine 135–glycine 139, aspartate 169, glycine 182, aspartate 186, and asparagine 278. A Fe cation-binding site is contributed by aspartate 306. Residues glutamate 325–phenylalanine 344 are disordered. Over residues serine 326–phenylalanine 344 the composition is skewed to polar residues.

This sequence belongs to the KAE1 / TsaD family. Requires Fe(2+) as cofactor.

The protein resides in the cytoplasm. The catalysed reaction is L-threonylcarbamoyladenylate + adenosine(37) in tRNA = N(6)-L-threonylcarbamoyladenosine(37) in tRNA + AMP + H(+). Required for the formation of a threonylcarbamoyl group on adenosine at position 37 (t(6)A37) in tRNAs that read codons beginning with adenine. Is involved in the transfer of the threonylcarbamoyl moiety of threonylcarbamoyl-AMP (TC-AMP) to the N6 group of A37, together with TsaE and TsaB. TsaD likely plays a direct catalytic role in this reaction. The polypeptide is tRNA N6-adenosine threonylcarbamoyltransferase (Corynebacterium glutamicum (strain ATCC 13032 / DSM 20300 / JCM 1318 / BCRC 11384 / CCUG 27702 / LMG 3730 / NBRC 12168 / NCIMB 10025 / NRRL B-2784 / 534)).